Consider the following 1500-residue polypeptide: Secreted chitinase LysM12 (1500 aa).

A signal peptide spans 1 to 23 (MAPLWNGMAAGLLLSAAVVSGQA). N53, N225, N251, and N270 each carry an N-linked (GlcNAc...) asparagine glycan. 2 LysM domains span residues 303–348 (RTQK…HVCC) and 367–415 (ATTT…VICI). A Chitin-binding type-1 domain is found at 428–496 (DAECGPQVPG…TNGCISHCGM (69 aa)). Disulfide bonds link C431–C459, C453–C465, C458–C472, and C490–C494. In terms of domain architecture, GH18 spans 507 to 879 (FRSVGYYESY…PGMILQMKSG (373 aa)). The active-site Proton donor is the E625. Y626 contributes to the chitin binding site. Residues N721 and N800 are each glycosylated (N-linked (GlcNAc...) asparagine). W852 is a binding site for chitin. N892 and N983 each carry an N-linked (GlcNAc...) asparagine glycan. The tract at residues 1164-1193 (IPKDIPYPDKTKRKDKDDDDNKKTEATDSE) is disordered. Positions 1169–1193 (PYPDKTKRKDKDDDDNKKTEATDSE) are enriched in basic and acidic residues.

Belongs to the glycosyl hydrolase 18 family. Chitinase class V subfamily.

Its subcellular location is the secreted. It catalyses the reaction Random endo-hydrolysis of N-acetyl-beta-D-glucosaminide (1-&gt;4)-beta-linkages in chitin and chitodextrins.. Secreted chitinase involved in the degradation of chitin, a component of the cell walls of fungi and exoskeletal elements of some animals (including worms and arthropods). Involved in pathogenesis via manipulation of host defenses for successful infection. The chain is Secreted chitinase LysM12 from Penicillium expansum (Blue mold rot fungus).